The primary structure comprises 312 residues: Ribosomal RNA small subunit methyltransferase H (312 aa).

S-adenosyl-L-methionine contacts are provided by residues 34–36 (GGH), aspartate 54, leucine 83, aspartate 99, and glutamine 106.

This sequence belongs to the methyltransferase superfamily. RsmH family.

The protein localises to the cytoplasm. It catalyses the reaction cytidine(1402) in 16S rRNA + S-adenosyl-L-methionine = N(4)-methylcytidine(1402) in 16S rRNA + S-adenosyl-L-homocysteine + H(+). Its function is as follows. Specifically methylates the N4 position of cytidine in position 1402 (C1402) of 16S rRNA. The polypeptide is Ribosomal RNA small subunit methyltransferase H (Rubrobacter xylanophilus (strain DSM 9941 / JCM 11954 / NBRC 16129 / PRD-1)).